Here is a 361-residue protein sequence, read N- to C-terminus: RLA class I histocompatibility antigen, alpha chain 11/11 (361 aa).

Residues 1–24 (MGSMAPRTLLLLLAGALTLKDTQA) form the signal peptide. The alpha-1 stretch occupies residues 25–114 (GSHSMRYFYT…ALRYYNQSAA (90 aa)). The Extracellular portion of the chain corresponds to 25–308 (GSHSMRYFYT…EPPAQPTALI (284 aa)). N-linked (GlcNAc...) asparagine glycosylation occurs at N110. The alpha-2 stretch occupies residues 115–206 (GSHTFQTMFG…EMGKETLQRA (92 aa)). 2 disulfides stabilise this stretch: C125–C188 and C227–C283. An alpha-3 region spans residues 207–298 (DPPKAHVTHH…GLPEPLTLTW (92 aa)). An Ig-like C1-type domain is found at 209–297 (PKAHVTHHPA…EGLPEPLTLT (89 aa)). The segment at 299-308 (EPPAQPTALI) is connecting peptide. Residues 309–329 (VGIVAGVLGVLLILGAVVAVV) form a helical membrane-spanning segment. The Cytoplasmic portion of the chain corresponds to 330–361 (RRKKHSSDGKGGRYTPAAGGHRDQGSDDSLMP). Residues 335–361 (SSDGKGGRYTPAAGGHRDQGSDDSLMP) are disordered. 2 positions are modified to phosphoserine: S355 and S358.

Belongs to the MHC class I family. In terms of assembly, heterodimer of an alpha chain and a beta chain (beta-2-microglobulin).

Its subcellular location is the membrane. Its function is as follows. Involved in the presentation of foreign antigens to the immune system. The protein is RLA class I histocompatibility antigen, alpha chain 11/11 of Oryctolagus cuniculus (Rabbit).